The chain runs to 356 residues: MKGKLLSFTLFGESHGKAVGILIEGLPPGIEVKVEEMKAELERRKGIRRFSTKRRESDEPVIVSGVFNGFTTGTPVTVLVWNRDADSSYYEEIRNTPRPGHADYPAKVKFFGYNDYRGGGHFSGRLTVGVVIAGYFAKKLLERFGIRVRAYIRRIGPVECPQVEPEELFASPNPYCPDEDAFERMLEEMEKARKSGDSVGGTVEVVAINVPAGLGGPWDEDIEADLASALFRIPAVKGVEFGLGFRFAEMRGSEANDPFVVRNGRVATETNNHGGVLGGITTGMPLVARVAFKPTPSIYLPQRTVDLERMDEVELRLRGRFDSCIVPKALPVVEAMVAFVLADHLLRRKAWEGVVR.

2 residues coordinate NADP(+): arginine 44 and arginine 49. FMN-binding positions include 121 to 123 (HFS), glycine 278, 293 to 297 (KPTPS), and arginine 320.

It belongs to the chorismate synthase family. FMNH2 serves as cofactor.

The catalysed reaction is 5-O-(1-carboxyvinyl)-3-phosphoshikimate = chorismate + phosphate. It functions in the pathway metabolic intermediate biosynthesis; chorismate biosynthesis; chorismate from D-erythrose 4-phosphate and phosphoenolpyruvate: step 7/7. Its function is as follows. Catalyzes the anti-1,4-elimination of the C-3 phosphate and the C-6 proR hydrogen from 5-enolpyruvylshikimate-3-phosphate (EPSP) to yield chorismate, which is the branch point compound that serves as the starting substrate for the three terminal pathways of aromatic amino acid biosynthesis. This reaction introduces a second double bond into the aromatic ring system. This is Chorismate synthase from Thermococcus gammatolerans (strain DSM 15229 / JCM 11827 / EJ3).